The chain runs to 480 residues: UDP-glycosyltransferase 72B1 (480 aa).

His-19 functions as the Proton acceptor in the catalytic mechanism. Asp-117 serves as the catalytic Charge relay. The UDP site is built by Ser-277, Trp-346, Ala-347, and His-364. Residues Ser-277, Trp-346, Ala-347, His-364, Trp-367, Asn-368, Ser-369, Glu-372, Tyr-386, Glu-388, and Gln-389 each coordinate UDP-alpha-D-glucose. Positions 368, 369, 372, and 386 each coordinate UDP.

The protein belongs to the UDP-glycosyltransferase family.

The catalysed reaction is hydroquinone + UDP-alpha-D-glucose = hydroquinone O-beta-D-glucopyranoside + UDP + H(+). Its function is as follows. Bifunctional O-glycosyltransferase and N-glycosyltransferase that can detoxify xenobiotics. Possesses high activity to metabolize the persistent pollutants 2,4,5-trichlorophenol (TCP) and 3,4-dichloroaniline (DCA). Also active on benzoates and benzoate derivatives in vitro. This Arabidopsis thaliana (Mouse-ear cress) protein is UDP-glycosyltransferase 72B1 (UGT72B1).